The sequence spans 75 residues: Caerin 1.11 (75 aa).

The N-terminal stretch at 1 to 22 (MASLKKSLFLVLFLGFVSVSIC) is a signal peptide. The propeptide occupies 23 to 49 (EEEKRQEDEDEHEEEGENQEEGSEEKR). The interval 24 to 48 (EEKRQEDEDEHEEEGENQEEGSEEK) is disordered. The span at 30-45 (DEDEHEEEGENQEEGS) shows a compositional bias: acidic residues. Leucine amide is present on leucine 74.

Belongs to the frog skin active peptide (FSAP) family. Caerin subfamily. Expressed by the skin glands.

It localises to the secreted. The protein resides in the target cell membrane. In terms of biological role, cationic amphipathic alpha-helical antimicrobial peptide with weak or no activity against both Gram-positive and Gram-negative bacteria. Is weakly active against E.coli (MIC=25 uM), E.cloacae (MIC=50 uM), K.pneumoniae (MIC=25 uM), and S.haemolyticus (MIC=50 uM). Has no activity against S.typhimurium, S.enteritidis, B.megaterium, and S.aureus (MIC&gt;100 uM). This chain is Caerin 1.11, found in Ranoidea caerulea (Green tree frog).